Consider the following 186-residue polypeptide: Elongation factor P (186 aa).

The protein belongs to the elongation factor P family.

It is found in the cytoplasm. It participates in protein biosynthesis; polypeptide chain elongation. Functionally, involved in peptide bond synthesis. Stimulates efficient translation and peptide-bond synthesis on native or reconstituted 70S ribosomes in vitro. Probably functions indirectly by altering the affinity of the ribosome for aminoacyl-tRNA, thus increasing their reactivity as acceptors for peptidyl transferase. The chain is Elongation factor P from Streptococcus gordonii (strain Challis / ATCC 35105 / BCRC 15272 / CH1 / DL1 / V288).